We begin with the raw amino-acid sequence, 581 residues long: Arginine--tRNA ligase (581 aa).

The short motif at proline 126–histidine 136 is the 'HIGH' region element.

This sequence belongs to the class-I aminoacyl-tRNA synthetase family. As to quaternary structure, monomer.

It is found in the cytoplasm. It carries out the reaction tRNA(Arg) + L-arginine + ATP = L-arginyl-tRNA(Arg) + AMP + diphosphate. This is Arginine--tRNA ligase from Shewanella amazonensis (strain ATCC BAA-1098 / SB2B).